The chain runs to 505 residues: Methylmalonyl-CoA carboxyltransferase 5S subunit (505 aa).

The region spanning 14-276 is the Pyruvate carboxyltransferase domain; sequence VGITELVLRD…TTNLDYDRLH (263 aa). Substrate contacts are provided by residues 22–26, Ala59, and Lys184; that span reads RDAHQ. Residue Asp23 participates in Co(2+) binding. Residues Lys184, His215, and His217 each contribute to the Co(2+) site. The residue at position 184 (Lys184) is an N6-carboxylysine; partial.

In terms of assembly, homodimer. Transcarboxylase is composed of three subunits: 1.3S, 5S, and 12S. The core of the enzyme is composed of six 12S subunits. On each side of the core there are three pairs of 5S subunits. Each 5S dimer is attached to the core by two 1.3S subunits. Thus the total number of chains is 30 (6 + 12 + 12). Co(2+) serves as cofactor. In terms of processing, lys-184 is carboxylated in the free enzyme and helps to coordinate the cobalt ion. Lys-184 is partially carboxylated in the complex with pyruvate, but is not carboxylated in the oxaloacetate-bound form.

It carries out the reaction (S)-methylmalonyl-CoA + pyruvate = propanoyl-CoA + oxaloacetate. The 5S subunit specifically catalyzes the transfer of the carboxyl group from biotin of the 1.3S subunit to pyruvate to form oxaloacetate and 1.3S biotin. This Propionibacterium freudenreichii subsp. shermanii protein is Methylmalonyl-CoA carboxyltransferase 5S subunit.